We begin with the raw amino-acid sequence, 264 residues long: Glucosamine-6-phosphate deaminase (264 aa).

Catalysis depends on D67, which acts as the Proton acceptor; for enolization step. Residue N136 is the For ring-opening step of the active site. H138 functions as the Proton acceptor; for ring-opening step in the catalytic mechanism. E143 (for ring-opening step) is an active-site residue.

The protein belongs to the glucosamine/galactosamine-6-phosphate isomerase family. NagB subfamily. In terms of assembly, homohexamer.

It carries out the reaction alpha-D-glucosamine 6-phosphate + H2O = beta-D-fructose 6-phosphate + NH4(+). Its pathway is amino-sugar metabolism; N-acetylneuraminate degradation; D-fructose 6-phosphate from N-acetylneuraminate: step 5/5. Catalyzes the reversible isomerization-deamination of glucosamine 6-phosphate (GlcN6P) to form fructose 6-phosphate (Fru6P) and ammonium ion. This is Glucosamine-6-phosphate deaminase from Shewanella woodyi (strain ATCC 51908 / MS32).